Here is a 222-residue protein sequence, read N- to C-terminus: DnaJ homolog subfamily B member 9 (222 aa).

An N-terminal signal peptide occupies residues 1–23; that stretch reads MATPQSVFVFAICILMITELILA. In terms of domain architecture, J spans 26 to 90; sequence NYYDILGVPK…NRRKEYDIIG (65 aa). A divergent targeting domain region spans residues 91–222; it reads HSAFTNGKGQ…VTTYTDCSGQ (132 aa). S133 is modified (phosphoserine).

In terms of assembly, interacts with HSPA5/BiP; interaction is direct. Interacts with ERN1/IRE1 (via the luminal region). Interacts with DERL1.

The protein resides in the endoplasmic reticulum lumen. In terms of biological role, co-chaperone for Hsp70 protein HSPA5/BiP that acts as a key repressor of the ERN1/IRE1-mediated unfolded protein response (UPR). J domain-containing co-chaperones stimulate the ATPase activity of Hsp70 proteins and are required for efficient substrate recognition by Hsp70 proteins. In the unstressed endoplasmic reticulum, interacts with the luminal region of ERN1/IRE1 and selectively recruits HSPA5/BiP: HSPA5/BiP disrupts the dimerization of the active ERN1/IRE1 luminal region, thereby inactivating ERN1/IRE1. Also involved in endoplasmic reticulum-associated degradation (ERAD) of misfolded proteins. Required for survival of B-cell progenitors and normal antibody production. This Rattus norvegicus (Rat) protein is DnaJ homolog subfamily B member 9.